The chain runs to 157 residues: Putative electron transport protein YsaA (157 aa).

4Fe-4S ferredoxin-type domains follow at residues N2–C32, K48–G80, G80–S109, and K112–V144. The [4Fe-4S] cluster site is built by C12, C15, C18, C22, C58, C61, C66, C70, C89, C92, C95, C99, C118, C121, C130, and C134.

This Escherichia coli (strain K12) protein is Putative electron transport protein YsaA (ysaA).